Here is a 569-residue protein sequence, read N- to C-terminus: MPYKISRAAYAGMFGPTVGDKVRLADTELFIEIEKDHTTYGEEVKFGGGKVIRDGMGQSQATRAEGAVDTVITNAVIVDHSGIYKADVGLKNGRIHAIGKAGNPDTQPGVTIIVGPSTEAIAGEGKILTAGGMDAHIHYICPQQIEEALMSGVTCMLGGGSGPAHGTLATTCTGAWHIERMIESFDAFPMNLALAGKGNASLPAPLEEMILAGASSLKLHEDWGTTPAAIDNCLTVADEYDVQVMIHTDTLNESGFVEDTVAAIRGRTIHAFHTEGAGGGHAPDIIKVCGNPNVIPSSTNPTRPYTVNTLAEHLDMLMVCHHLSPSIPEDIAFAESRIRKETIAAEDILHDIGAFSIISSDSQAMGRVGEVAIRTWQTADKMKRQRGRLKEETGENDNFRVRRYIAKYTINPAIAQGVSHEIGSVEVGKRADLVLWNPAFFGVKPEMVLLGGSIAAAPMGDPNASIPTPQPMHYRPMFAAYGKLRTNSSVTFVSQASLDGGLAQRLGVAKKLLAVKNVRGGISKASMIHNSLTPHIEVDPETYEVRADGELLTCEPATVLPMAQRYFLF.

The 439-residue stretch at 131–569 folds into the Urease domain; sequence GGMDAHIHYI…LPMAQRYFLF (439 aa). 3 residues coordinate Ni(2+): histidine 136, histidine 138, and lysine 218. Lysine 218 bears the N6-carboxylysine mark. Histidine 220 provides a ligand contact to substrate. The Ni(2+) site is built by histidine 247 and histidine 273. Residue histidine 321 is the Proton donor of the active site. Aspartate 361 is a Ni(2+) binding site.

This sequence belongs to the metallo-dependent hydrolases superfamily. Urease alpha subunit family. Heterotrimer of UreA (gamma), UreB (beta) and UreC (alpha) subunits. Three heterotrimers associate to form the active enzyme. Ni cation is required as a cofactor. In terms of processing, carboxylation allows a single lysine to coordinate two nickel ions.

It is found in the cytoplasm. The catalysed reaction is urea + 2 H2O + H(+) = hydrogencarbonate + 2 NH4(+). It functions in the pathway nitrogen metabolism; urea degradation; CO(2) and NH(3) from urea (urease route): step 1/1. The polypeptide is Urease subunit alpha (Agrobacterium fabrum (strain C58 / ATCC 33970) (Agrobacterium tumefaciens (strain C58))).